The following is a 1045-amino-acid chain: Tyrosine-protein kinase-like otk (1045 aa).

A signal peptide spans 1–25 (MPIVMDMNMLLMLSLAFTVMAPASA). 5 consecutive Ig-like C2-type domains span residues 26–116 (SSSR…AKLS), 115–200 (LSVI…RVMS), 260–373 (PEGL…APVN), 376–469 (PGAL…VAIN), and 474–564 (PRFS…VRLL). Residues 26–587 (SSSRFTQPPQ…AGDGFLVTRA (562 aa)) are Extracellular-facing. Cystine bridges form between Cys49–Cys97, Cys139–Cys189, Cys285–Cys362, and Cys406–Cys453. 8 N-linked (GlcNAc...) asparagine glycosylation sites follow: Asn344, Asn424, Asn435, Asn442, Asn450, Asn463, Asn518, and Asn530. Cys496 and Cys548 are disulfide-bonded. Residues 588-608 (VLITMTVALAYIVLVVGLMLW) traverse the membrane as a helical segment. The Cytoplasmic segment spans residues 609 to 1045 (CRYRRQARKA…LSKAMQAAEK (437 aa)). The interval 628-676 (AGGDQAESGKNTEQEPCLSKQRNGHGKSRTAANGDAQKSDDTACSQQSK) is disordered. A Phosphoserine modification is found at Ser681. The Protein kinase; inactive domain occupies 695-1040 (LSELIQIGRG…QLGAALSKAM (346 aa)). The segment at 722–790 (ASPSDKDADT…QPQEQAQSES (69 aa)) is disordered. The span at 725 to 736 (SDKDADTEKQHS) shows a compositional bias: basic and acidic residues. A compositionally biased stretch (gly residues) spans 743-752 (GASGASGCGS). Residues 771–782 (DDIEEIKEEEQP) show a composition bias toward acidic residues.

It belongs to the protein kinase superfamily. Tyr protein kinase family. Insulin receptor subfamily. Interacts with plexA; component of a receptor complex that mediates the repulsive signaling in response to Semaphorin ligands.

The protein localises to the cell membrane. Acts as a calcium-dependent, homophilic cell adhesion molecule that regulates neural recognition during the development of the nervous system. Component of the repulsive Plexin signaling response to regulate motor axon guidance at the embryonic stage. Also component of a receptor complex that is required in the adult visual system to innervate the lamina layer; specific targeting of R1-R6 axons. The polypeptide is Tyrosine-protein kinase-like otk (Drosophila mojavensis (Fruit fly)).